A 746-amino-acid polypeptide reads, in one-letter code: UvrABC system protein C (746 aa).

In terms of domain architecture, GIY-YIG spans 18 to 97 (AKPGVYKWRD…IKEFDPRFNV (80 aa)). In terms of domain architecture, UVR spans 211–246 (RPYIAQLTRDMKEASAELEFEKAARLRDQIQMLETV). The interval 557–577 (ANGNDNGEGGSDISGKGHAVP) is disordered.

This sequence belongs to the UvrC family. In terms of assembly, interacts with UvrB in an incision complex.

Its subcellular location is the cytoplasm. The UvrABC repair system catalyzes the recognition and processing of DNA lesions. UvrC both incises the 5' and 3' sides of the lesion. The N-terminal half is responsible for the 3' incision and the C-terminal half is responsible for the 5' incision. This Bifidobacterium longum (strain DJO10A) protein is UvrABC system protein C.